Here is a 311-residue protein sequence, read N- to C-terminus: Methionyl-tRNA formyltransferase (311 aa).

109–112 (SLLP) is a (6S)-5,6,7,8-tetrahydrofolate binding site.

It belongs to the Fmt family.

It carries out the reaction L-methionyl-tRNA(fMet) + (6R)-10-formyltetrahydrofolate = N-formyl-L-methionyl-tRNA(fMet) + (6S)-5,6,7,8-tetrahydrofolate + H(+). Its function is as follows. Attaches a formyl group to the free amino group of methionyl-tRNA(fMet). The formyl group appears to play a dual role in the initiator identity of N-formylmethionyl-tRNA by promoting its recognition by IF2 and preventing the misappropriation of this tRNA by the elongation apparatus. The sequence is that of Methionyl-tRNA formyltransferase from Staphylococcus aureus (strain JH1).